Consider the following 347-residue polypeptide: Very-long-chain 3-oxoacyl-CoA reductase (347 aa).

The helical transmembrane segment at 20–40 (LLWVVFGLGVLKCTTLSLRFL) threads the bilayer. NADP(+) is bound by residues aspartate 120, asparagine 147, tyrosine 223, lysine 227, valine 256, and serine 258. The active-site Proton donor is the tyrosine 223. The Lowers pKa of active site Tyr role is filled by lysine 227.

This sequence belongs to the short-chain dehydrogenases/reductases (SDR) family. In terms of assembly, interacts with the fatty acid elongation system components ELO3 and TSC13.

It is found in the endoplasmic reticulum membrane. The catalysed reaction is a very-long-chain (3R)-3-hydroxyacyl-CoA + NADP(+) = a very-long-chain 3-oxoacyl-CoA + NADPH + H(+). The enzyme catalyses 3-oxooctadecanoyl-CoA + NADPH + H(+) = (3R)-hydroxyoctadecanoyl-CoA + NADP(+). It catalyses the reaction 3-oxoeicosanoyl-CoA + NADPH + H(+) = (3R)-hydroxyeicosanoyl-CoA + NADP(+). It carries out the reaction 3-oxodocosanoyl-CoA + NADPH + H(+) = (3R)-hydroxydocosanoyl-CoA + NADP(+). The catalysed reaction is 3-oxotetracosanoyl-CoA + NADPH + H(+) = (3R)-hydroxytetracosanoyl-CoA + NADP(+). The enzyme catalyses 3-oxohexacosanoyl-CoA + NADPH + H(+) = (3R)-hydroxyhexacosanoyl-CoA + NADP(+). The protein operates within lipid metabolism; fatty acid biosynthesis. Component of the microsomal membrane bound fatty acid elongation system, which produces the 26-carbon very long-chain fatty acids (VLCFA) from palmitate. Catalyzes the reduction of the 3-ketoacyl-CoA intermediate that is formed in each cycle of fatty acid elongation. VLCFAs serve as precursors for ceramide and sphingolipids. The chain is Very-long-chain 3-oxoacyl-CoA reductase (IFA38) from Saccharomyces cerevisiae (strain ATCC 204508 / S288c) (Baker's yeast).